The following is a 97-amino-acid chain: Small ribosomal subunit protein bS20 (97 aa).

This sequence belongs to the bacterial ribosomal protein bS20 family.

Its function is as follows. Binds directly to 16S ribosomal RNA. The protein is Small ribosomal subunit protein bS20 of Gloeothece citriformis (strain PCC 7424) (Cyanothece sp. (strain PCC 7424)).